Here is a 1179-residue protein sequence, read N- to C-terminus: ATP-dependent helicase/deoxyribonuclease subunit B (1179 aa).

Belongs to the helicase family. AddB/RexB type 2 subfamily. In terms of assembly, heterodimer of AddA and RexB. Mg(2+) serves as cofactor.

The heterodimer acts as both an ATP-dependent DNA helicase and an ATP-dependent, dual-direction single-stranded exonuclease. Recognizes the chi site generating a DNA molecule suitable for the initiation of homologous recombination. This subunit has 5' -&gt; 3' nuclease activity but not helicase activity. In Lacticaseibacillus paracasei (strain ATCC 334 / BCRC 17002 / CCUG 31169 / CIP 107868 / KCTC 3260 / NRRL B-441) (Lactobacillus paracasei), this protein is ATP-dependent helicase/deoxyribonuclease subunit B.